The sequence spans 486 residues: Uridine/cytidine kinase UKL1, chloroplastic (486 aa).

A chloroplast-targeting transit peptide spans 1-47 (MPEDSSSLDYAMEKASGPHFSGLRFDGLLSSSPPNSSVVSSLRSAVS). The segment covering 31 to 54 (SSPPNSSVVSSLRSAVSSSSPSSS) has biased composition (low complexity). The disordered stretch occupies residues 31–67 (SSPPNSSVVSSLRSAVSSSSPSSSDPEAPKQPFIIGV). The uridine kinase stretch occupies residues 59–264 (PKQPFIIGVS…ITQHIHTKLG (206 aa)). The uracil phosphoribosyltransferase stretch occupies residues 274–486 (NVYVIQSTFQ…RYFGTDEEDQ (213 aa)). GTP-binding positions include lysine 298, arginine 307, and 341 to 344 (CKKL). The 5-phospho-alpha-D-ribose 1-diphosphate site is built by arginine 351 and arginine 376. GTP is bound at residue arginine 396. 5-phospho-alpha-D-ribose 1-diphosphate-binding positions include aspartate 402, 407 to 410 (TGNS), and glutamate 473. Residue 472-474 (GEF) coordinates uracil.

This sequence in the N-terminal section; belongs to the uridine kinase family. It in the C-terminal section; belongs to the UPRTase family. In terms of tissue distribution, expressed in roots, leaves and stems.

Its subcellular location is the plastid. The protein localises to the chloroplast. The protein resides in the cytoplasm. The enzyme catalyses cytidine + ATP = CMP + ADP + H(+). It catalyses the reaction uridine + ATP = UMP + ADP + H(+). It participates in pyrimidine metabolism; CTP biosynthesis via salvage pathway; CTP from cytidine: step 1/3. It functions in the pathway pyrimidine metabolism; UMP biosynthesis via salvage pathway; UMP from uridine: step 1/1. In terms of biological role, involved in the pyrimidine salvage pathway. Phosphorylates uridine to uridine monophosphate (UMP). Phosphorylates cytidine to cytidine monophosphate (CMP). Does not possess uracil phosphoribosyltransferase (UPRTase) activity that catalyzes the conversion of uracil and 5-phospho-alpha-D-ribose 1-diphosphate (PRPP) to UMP and diphosphate. This is Uridine/cytidine kinase UKL1, chloroplastic from Arabidopsis thaliana (Mouse-ear cress).